The primary structure comprises 120 residues: Large ribosomal subunit protein uL18 (120 aa).

The protein belongs to the universal ribosomal protein uL18 family. In terms of assembly, part of the 50S ribosomal subunit; part of the 5S rRNA/L5/L18/L25 subcomplex. Contacts the 5S and 23S rRNAs.

Its function is as follows. This is one of the proteins that bind and probably mediate the attachment of the 5S RNA into the large ribosomal subunit, where it forms part of the central protuberance. This chain is Large ribosomal subunit protein uL18, found in Rhodospirillum centenum (strain ATCC 51521 / SW).